Here is a 531-residue protein sequence, read N- to C-terminus: Peptide chain release factor 3 (531 aa).

In terms of domain architecture, tr-type G spans 13-282; that stretch reads AKRRTFAIIS…TLIKYSPPPK (270 aa). GTP-binding positions include 22–29, 90–94, and 144–147; these read SHPDAGKT, DTPGH, and NKLD.

This sequence belongs to the TRAFAC class translation factor GTPase superfamily. Classic translation factor GTPase family. PrfC subfamily.

It localises to the cytoplasm. Functionally, increases the formation of ribosomal termination complexes and stimulates activities of RF-1 and RF-2. It binds guanine nucleotides and has strong preference for UGA stop codons. It may interact directly with the ribosome. The stimulation of RF-1 and RF-2 is significantly reduced by GTP and GDP, but not by GMP. This chain is Peptide chain release factor 3, found in Psychrobacter arcticus (strain DSM 17307 / VKM B-2377 / 273-4).